Reading from the N-terminus, the 534-residue chain is Cytochrome P450 monooxygenase ascG (534 aa).

The helical transmembrane segment at 13–33 threads the bilayer; it reads FVASFPALSAAAGLIVAISFI. Residue asparagine 466 is glycosylated (N-linked (GlcNAc...) asparagine). Position 469 (cysteine 469) interacts with heme.

The protein belongs to the cytochrome P450 family. Requires heme as cofactor.

The protein localises to the membrane. It carries out the reaction ilicicolin C + NADPH + O2 + H(+) = ascochlorin + NADP(+) + 2 H2O. It participates in secondary metabolite biosynthesis; terpenoid biosynthesis. Its function is as follows. Cytochrome P450 monooxygenase; part of the asc-1 gene cluster that mediates the biosynthesis of both ascochlorin and ascofuranone, a strong inhibitor of cyanide-insensitive alternative oxidases and a promising drug candidate against African trypanosomiasis. The first step in the pathway is performed by the non-reducing polyketide synthase ascC that produces orsellinic acid by condensing acetyl-CoA with 3 malonyl-CoA units. Orsellinic acid is then prenylated by the prenyltransferase ascA to yield ilicicolinic acid B. Ilicicolinic acid B is further reduced to ilicicolin B by the reductase ascB. The halogenase ascD then chlorinates ilicicolin B to produce ilicicolin A which is converted to ilicicolin A epoxide by the cytochrome P450 monooxygenase ascE that catalyzes stereoselective epoxidation of the terminal double bond of the prenyl group. Ilicicolin A epoxide is the last common precursor for the biosynthesis of ascofuranone and ascochlorin. The terpene cyclase ascF produces a monocyclic terpene, and the cyclization reaction is proposed to be initiated by protonation of the terminal epoxide of ilicicolin A epoxide to generate a monocyclic tertiarycation, which is followed by a series of hydride and methyl shifts with abstraction of proton, leading to the formation of the (14S,15R,19R)-trimethylcyclohexanone ring structure of ilicicolin C, which is finally reduced to ascochlorin by the dehydrogenase ascG. On the other hand, ilicicolin A epoxide is hydroxylated by the cytochrome P450 monooxygenase ascH, and the resultant product is cyclized by the terpene cyclase ascI to ascofuranol via protonation-initiated epoxide ring opening, which facilitates the 6-endo-tet cyclization to form the tetrahy-drofuran ring. Finally, ascofuranol is oxidized into ascofuranone by ascJ. This chain is Cytochrome P450 monooxygenase ascG, found in Acremonium egyptiacum (Oospora egyptiaca).